The chain runs to 531 residues: Peptide chain release factor 3 (531 aa).

The region spanning 13–282 (SKRRTFAIIS…GLTQWAPSPM (270 aa)) is the tr-type G domain. Residues 22-29 (SHPDAGKT), 90-94 (DTPGH), and 144-147 (NKLD) each bind GTP.

Belongs to the TRAFAC class translation factor GTPase superfamily. Classic translation factor GTPase family. PrfC subfamily.

The protein localises to the cytoplasm. Its function is as follows. Increases the formation of ribosomal termination complexes and stimulates activities of RF-1 and RF-2. It binds guanine nucleotides and has strong preference for UGA stop codons. It may interact directly with the ribosome. The stimulation of RF-1 and RF-2 is significantly reduced by GTP and GDP, but not by GMP. This Vibrio cholerae serotype O1 (strain ATCC 39315 / El Tor Inaba N16961) protein is Peptide chain release factor 3.